Here is a 169-residue protein sequence, read N- to C-terminus: S-ribosylhomocysteine lyase (169 aa).

Residues His-54, His-58, and Cys-129 each coordinate Fe cation.

The protein belongs to the LuxS family. As to quaternary structure, homodimer. The cofactor is Fe cation.

The enzyme catalyses S-(5-deoxy-D-ribos-5-yl)-L-homocysteine = (S)-4,5-dihydroxypentane-2,3-dione + L-homocysteine. Its function is as follows. Involved in the synthesis of autoinducer 2 (AI-2) which is secreted by bacteria and is used to communicate both the cell density and the metabolic potential of the environment. The regulation of gene expression in response to changes in cell density is called quorum sensing. Catalyzes the transformation of S-ribosylhomocysteine (RHC) to homocysteine (HC) and 4,5-dihydroxy-2,3-pentadione (DPD). The sequence is that of S-ribosylhomocysteine lyase from Haemophilus ducreyi (strain 35000HP / ATCC 700724).